The following is a 416-amino-acid chain: Enterobactin exporter EntS (416 aa).

The Cytoplasmic segment spans residues 1–21 (MNKQSWLLNLSLLKTHPAFRA). The helical transmembrane segment at 22-42 (VFLARFISIVSLGLLGVAVPV) threads the bilayer. Residues 43–55 (QIQMMTHSTWQVG) are Periplasmic-facing. A helical membrane pass occupies residues 56–76 (LSVTLTGGAMFVGLMVGGVLA). Residues 77 to 83 (DRYERKK) are Cytoplasmic-facing. A helical membrane pass occupies residues 84–104 (VILLARGTCGIGFIGLCLNAL). Over 105-109 (LPEPS) the chain is Periplasmic. Residues 110–130 (LLAIYLLGLWDGFFASLGVTA) traverse the membrane as a helical segment. Residues 131–156 (LLAATPALVGRENLMQAGAITMLTVR) lie on the Cytoplasmic side of the membrane. A helical membrane pass occupies residues 157 to 177 (LGSVISPMIGGLLLATGGVAW). N178 is a topological domain (periplasmic). A helical membrane pass occupies residues 179-199 (YGLAAAGTFITLLPLLSLPAL). The Cytoplasmic segment spans residues 200–218 (PPPPQPREHPLKSLLAGFR). Residues 219 to 239 (FLLASPLVGGIALLGGLLTMA) form a helical membrane-spanning segment. The Periplasmic segment spans residues 240–256 (SAVRVLYPALADNWQMS). Residues 257-277 (AAQIGFLYAAIPLGAAIGALT) traverse the membrane as a helical segment. Over 278–287 (SGKLAHSVRP) the chain is Cytoplasmic. A helical membrane pass occupies residues 288-307 (GLLMLLSTLGAFLAIGLFGL). Residues 308 to 313 (MPMWIL) are Periplasmic-facing. Residues 314–336 (GVVCLALFGWLSAVSSLLQYTML) traverse the membrane as a helical segment. Over 337 to 356 (QTQTPEAMLGRINGLWTAQN) the chain is Cytoplasmic. A helical transmembrane segment spans residues 357-377 (VTGDAIGAALLGGLGAMMTPV). A topological domain (periplasmic) is located at residue A378. The helical transmembrane segment at 379–399 (SASASGFGLLIIGVLLLLVLV) threads the bilayer. Over 400–416 (ELRRFRQTPPQVTASGS) the chain is Cytoplasmic.

The protein belongs to the major facilitator superfamily. EntS (TC 2.A.1.38) family.

It is found in the cell inner membrane. Component of an export pathway for enterobactin. The protein is Enterobactin exporter EntS of Escherichia coli O6:K15:H31 (strain 536 / UPEC).